The sequence spans 470 residues: FLYWCH transcription factor 2 (470 aa).

The segment at 102–148 (SQLISEDTRPSASSSPSSTATAVSNSGQSNATSTSSSSTEPEYKPRN) is disordered. Residues 111-140 (PSASSSPSSTATAVSNSGQSNATSTSSSST) show a composition bias toward low complexity. The FLYWCH-type zinc finger occupies 145 to 204 (KPRNVREKVYADGYIMSFDKKSCCGTKEFWRCERKNDCNARMHSDINTREIVRKLHPHNH).

Functionally, probable transcription factor. May bind to the promoters of target genes, including micro-RNA genes, in order to repress expression, and acting redundantly with flh-1 and flh-3. The chain is FLYWCH transcription factor 2 from Caenorhabditis elegans.